The primary structure comprises 928 residues: MKKRLVTLLAGLLTVLSMGFGLAQFSDVPAGHWAKEAVEALAAKGIILGFPDGTFRGNENLTRYQAALLIYRLLQQIEEELKTQGTSPTMEALAPEDLEALKNAVQELAAELASLGVRVSALEDSAATKEDIARLEAMIAELKAQPMPEPGMDQAALKDLMDRVEAASIAADTALAQAQQLAERLDALAQDVEGVKGDLAGLRSQVEANADAIQALNELAVLLNQDVLSLQDRVTALEKMVSGGQELPDLEQFATKEDVAAVQEFAAALRSDLVGLSDKVSKLEEQVAELNKVRYSISGSLSATYGTVVTDTGTNFDIDRLFPGNAFSTGTYGSFSSSVQAGDSNQGNISGGSASLTFGVKVAQPGTSGVNVSEASATLQVPAAFGTAYTSAPTIRLNAASVKGNVDGQAFSVVYSRAVSSFKFNDYLFANDNDSEPANPRQGMVATFSATKFPLAPEVTVVAGVAGPDATKDTAPALNGNYFGIRTAVKPFSALNLALNYATNLGNRSAIGVDGGLELGPAKLSGLWVSSQTPGSPFADFFDNTLSDWAYYAQAEAKLGPLSLSANYHAVDPQYADGQAGMSENEDTTYYGGEKAGAPYGADTRGLGVSASVGFGPVTLKGYAESEGDYNLAPGSVNDAWGVAATLGSFRGFSLTGFYNAAYTGGNGYFSLTTAVDAIAPGVTYYYTIENQKYSSSWGVRVAHDGKAEDALIPTLNLTAQYATYYVSGHTDIQVYADLAKPFKLAILSLSPGFRYHSFAGAGSAPTYTTLKGGVQVSTDPLLFGLSLDGAVSYRRTQYTNNPSNVTTYELYYRAGVKLQDFLAPKLNFSVAYAHYEGDQLAGTGLPVVGSGNQAFNFARDRVYRSPDPIAAPWLATPGTQAGKLDGFYIEAKYYDLTVAYGEFVLDDLNGTNPNFGRGFKISYTVKF.

Positions 1 to 23 are cleaved as a signal peptide; the sequence is MKKRLVTLLAGLLTVLSMGFGLA. The region spanning 24-84 is the SLH domain; the sequence is QFSDVPAGHW…QQIEEELKTQ (61 aa).

In terms of assembly, homotrimer.

It localises to the cell outer membrane. Functionally, plays an important role in the structural organization and integrity of the cell envelope, bridging the outer membrane to the peptidoglyan layer. Appears to be a nonselective channel. The polypeptide is Outer membrane protein SlpA (slpA) (Thermus thermophilus (strain ATCC 27634 / DSM 579 / HB8)).